A 327-amino-acid polypeptide reads, in one-letter code: Neurogenic differentiation factor 6-A (327 aa).

Residues 17–85 (GANFPRDCVG…KKMTKARVDR (69 aa)) form a disordered region. Positions 24–46 (CVGDLKGNKQEPFEKEETLSHVM) are enriched in basic and acidic residues. A compositionally biased stretch (acidic residues) spans 47-63 (DDDDSEKDEDEREDGQD). The span at 68-80 (PRRRGPRKKKMTK) shows a compositional bias: basic residues. A Nuclear localization signal motif is present at residues 74-80 (RKKKMTK). The bHLH domain maps to 88 to 140 (VRRMEANARERNRMHGLNNALDSLRKVVPCYSKTQKLSKIETLRLAKNYIWAL).

Efficient DNA binding requires dimerization with another bHLH protein. As to expression, embryonic olfactory bulbs. In adult, expressed in brain, eye, intestine, muscle, ovary and skin.

The protein resides in the nucleus. Its function is as follows. Differentiation factor required for neurogenesis. Acts as an upstream activator of isl1. The sequence is that of Neurogenic differentiation factor 6-A from Danio rerio (Zebrafish).